Reading from the N-terminus, the 592-residue chain is Threonine dehydratase biosynthetic, chloroplastic (592 aa).

The N-terminal 91 residues, 1 to 91 (MNSVQLPTAQ…NEAENGSIAE (91 aa)), are a transit peptide targeting the chloroplast. Lysine 141 bears the N6-(pyridoxal phosphate)lysine mark. ACT-like domains lie at 419-490 (AVLA…NLTT) and 512-583 (VLCR…LVSD).

Belongs to the serine/threonine dehydratase family. The cofactor is pyridoxal 5'-phosphate.

It is found in the plastid. It localises to the chloroplast. The catalysed reaction is L-threonine = 2-oxobutanoate + NH4(+). It participates in amino-acid biosynthesis; L-isoleucine biosynthesis; 2-oxobutanoate from L-threonine: step 1/1. Allosterically inhibited by isoleucine. Strain GM11b is isoleucine feedback insensitive and is resistant to the antimetabolite L-O-methylthreonine. Its function is as follows. Catalyzes the formation of alpha-ketobutyrate from threonine in a two-step reaction. The first step is a dehydration of threonine, followed by rehydration and liberation of ammonia. This Arabidopsis thaliana (Mouse-ear cress) protein is Threonine dehydratase biosynthetic, chloroplastic (OMR1).